The primary structure comprises 873 residues: Zinc fingers and homeoboxes protein 1 (873 aa).

Residues 24–63 form a disordered region; sequence LISDLDEGPPVLTPVENTRAESISSDEEVHESVDSDNQQN. Threonine 36 is subject to Phosphothreonine. A phosphoserine mark is found at serine 45, serine 47, and serine 48. 2 consecutive C2H2-type zinc fingers follow at residues 70 to 93 and 102 to 125; these read YECK…DSEH and YVCV…LKYH. A Glycyl lysine isopeptide (Lys-Gly) (interchain with G-Cter in SUMO2) cross-link involves residue lysine 159. The tract at residues 200–236 is disordered; the sequence is HNSVEDVPEEKENEIKPDREEIVENPSSSASESNTST. The residue at position 202 (serine 202) is a Phosphoserine. Residues 212–221 are compositionally biased toward basic and acidic residues; sequence NEIKPDREEI. A compositionally biased stretch (low complexity) spans 223–236; sequence ENPSSSASESNTST. A required for dimerization region spans residues 272–432; it reads NSNLIPKVLI…QNNIQKSQVP (161 aa). Residues 272–564 are required for interaction with NFYA; it reads NSNLIPKVLI…AQPKQSWNPF (293 aa). The homeobox 1 DNA-binding region spans 284 to 346; the sequence is NSIPTYNAAL…LKHGVSWTPE (63 aa). Glycyl lysine isopeptide (Lys-Gly) (interchain with G-Cter in SUMO2) cross-links involve residues lysine 441, lysine 454, lysine 485, and lysine 629. 2 DNA-binding regions (homeobox) span residues 464–526 and 569–630; these read SFGI…KSNQ and PQKF…EEKM. Disordered stretches follow at residues 626 to 667 and 732 to 769; these read KEEK…ICKK and SSMN…INNW. Serine 648 carries the phosphoserine modification. A DNA-binding region (homeobox 4) is located at residues 660–722; sequence STGKICKKTP…YAWKNGNLKW (63 aa). Residues 734–768 are required for nuclear localization; sequence MNGLSSLRKRGRGRPKGRGRGRPRGRPRGSKRINN. The segment covering 740 to 764 has biased composition (basic residues); it reads LRKRGRGRPKGRGRGRPRGRPRGSK. Phosphoserine is present on serine 774. The segment at residues 777–832 is a DNA-binding region (homeobox 5); the sequence is KFKTGTAILKDYYLKHKFLNEQDLDELVNKSHMGYEQVREWFAERQRRSELGIELF. The interval 829–873 is disordered; sequence IELFEENEEEDEVIDDQEEDEEETDDSDTWEPPRHVKRKLSKSDD. Residues 831-857 show a composition bias toward acidic residues; the sequence is LFEENEEEDEVIDDQEEDEEETDDSDT. Residues 831–873 are required for repressor activity; that stretch reads LFEENEEEDEVIDDQEEDEEETDDSDTWEPPRHVKRKLSKSDD. The segment covering 863–873 has biased composition (basic residues); the sequence is HVKRKLSKSDD.

This sequence belongs to the ZHX family. In terms of assembly, forms homodimers. Heterodimer (via HD1 domain) with ZHX2 (via HD1 domain). Also forms a heterodimer with ZHX3 which is a prerequisite for repressor activity. Interacts with ATF7IP and NFYA. Interacts (via homeobox domains) with DNMT3B (via PWWP domain).

The protein resides in the nucleus. Functionally, acts as a transcriptional repressor. Increases DNMT3B-mediated repressive transcriptional activity when DNMT3B is tethered to DNA. May link molecule between DNMT3B and other co-repressor proteins. The chain is Zinc fingers and homeoboxes protein 1 (ZHX1) from Pan troglodytes (Chimpanzee).